A 375-amino-acid polypeptide reads, in one-letter code: UDP-N-acetylglucosamine--N-acetylmuramyl-(pentapeptide) pyrophosphoryl-undecaprenol N-acetylglucosamine transferase (375 aa).

Residues 15-17 (TGG), asparagine 126, arginine 169, serine 197, and glutamine 298 contribute to the UDP-N-acetyl-alpha-D-glucosamine site.

Belongs to the glycosyltransferase 28 family. MurG subfamily.

The protein resides in the cell inner membrane. The enzyme catalyses di-trans,octa-cis-undecaprenyl diphospho-N-acetyl-alpha-D-muramoyl-L-alanyl-D-glutamyl-meso-2,6-diaminopimeloyl-D-alanyl-D-alanine + UDP-N-acetyl-alpha-D-glucosamine = di-trans,octa-cis-undecaprenyl diphospho-[N-acetyl-alpha-D-glucosaminyl-(1-&gt;4)]-N-acetyl-alpha-D-muramoyl-L-alanyl-D-glutamyl-meso-2,6-diaminopimeloyl-D-alanyl-D-alanine + UDP + H(+). Its pathway is cell wall biogenesis; peptidoglycan biosynthesis. Functionally, cell wall formation. Catalyzes the transfer of a GlcNAc subunit on undecaprenyl-pyrophosphoryl-MurNAc-pentapeptide (lipid intermediate I) to form undecaprenyl-pyrophosphoryl-MurNAc-(pentapeptide)GlcNAc (lipid intermediate II). This is UDP-N-acetylglucosamine--N-acetylmuramyl-(pentapeptide) pyrophosphoryl-undecaprenol N-acetylglucosamine transferase from Rhodopseudomonas palustris (strain BisB18).